Consider the following 257-residue polypeptide: UPF0246 protein AHA_3667 (257 aa).

It belongs to the UPF0246 family.

This chain is UPF0246 protein AHA_3667, found in Aeromonas hydrophila subsp. hydrophila (strain ATCC 7966 / DSM 30187 / BCRC 13018 / CCUG 14551 / JCM 1027 / KCTC 2358 / NCIMB 9240 / NCTC 8049).